Here is an 89-residue protein sequence, read N- to C-terminus: Small ribosomal subunit protein uS15 (89 aa).

Belongs to the universal ribosomal protein uS15 family. As to quaternary structure, part of the 30S ribosomal subunit. Forms a bridge to the 50S subunit in the 70S ribosome, contacting the 23S rRNA.

Its function is as follows. One of the primary rRNA binding proteins, it binds directly to 16S rRNA where it helps nucleate assembly of the platform of the 30S subunit by binding and bridging several RNA helices of the 16S rRNA. Functionally, forms an intersubunit bridge (bridge B4) with the 23S rRNA of the 50S subunit in the ribosome. The protein is Small ribosomal subunit protein uS15 of Frankia alni (strain DSM 45986 / CECT 9034 / ACN14a).